The following is a 364-amino-acid chain: Tyrosine--tRNA ligase (364 aa).

Residues Tyr41, Tyr167, Gln171, Asp174, and Gln189 each coordinate L-tyrosine. A 'KMSKS' region motif is present at residues 238–242 (KMSKS). ATP is bound at residue Lys241.

This sequence belongs to the class-I aminoacyl-tRNA synthetase family. TyrS type 4 subfamily. In terms of assembly, homodimer.

The protein resides in the cytoplasm. The enzyme catalyses tRNA(Tyr) + L-tyrosine + ATP = L-tyrosyl-tRNA(Tyr) + AMP + diphosphate + H(+). Its function is as follows. Catalyzes the attachment of tyrosine to tRNA(Tyr) in a two-step reaction: tyrosine is first activated by ATP to form Tyr-AMP and then transferred to the acceptor end of tRNA(Tyr). This is Tyrosine--tRNA ligase from Sulfurisphaera tokodaii (strain DSM 16993 / JCM 10545 / NBRC 100140 / 7) (Sulfolobus tokodaii).